The sequence spans 694 residues: Elongation factor G (694 aa).

A tr-type G domain is found at 6–288 (KLYRNIGIAA…GVIEYLPSPT (283 aa)). GTP is bound by residues 15–22 (AHVDAGKT), 86–90 (DTPGH), and 140–143 (NKMD).

The protein belongs to the TRAFAC class translation factor GTPase superfamily. Classic translation factor GTPase family. EF-G/EF-2 subfamily.

It localises to the cytoplasm. Functionally, catalyzes the GTP-dependent ribosomal translocation step during translation elongation. During this step, the ribosome changes from the pre-translocational (PRE) to the post-translocational (POST) state as the newly formed A-site-bound peptidyl-tRNA and P-site-bound deacylated tRNA move to the P and E sites, respectively. Catalyzes the coordinated movement of the two tRNA molecules, the mRNA and conformational changes in the ribosome. This chain is Elongation factor G, found in Legionella pneumophila (strain Corby).